The following is a 242-amino-acid chain: Probable transcriptional regulatory protein lhv_0777 (242 aa).

The segment at 1–22 (MSGHSKWHNIQGRKNAQDAKRG) is disordered.

This sequence belongs to the TACO1 family.

It localises to the cytoplasm. The chain is Probable transcriptional regulatory protein lhv_0777 from Lactobacillus helveticus (strain DPC 4571).